Reading from the N-terminus, the 832-residue chain is Cadherin-like protein 26 (832 aa).

An N-terminal signal peptide occupies residues 1-27 (MAMRSGRHPSLLLLLVLLLWLLQVSII). Residues 28-614 (DSVQQETDDL…ELADAEVGLH (587 aa)) are Extracellular-facing. 4 Cadherin domains span residues 35 to 165 (DDLT…APQF), 166 to 275 (PEKE…RPAF), 276 to 396 (TQEN…PPAF), and 397 to 500 (HPQS…VPTL). Asparagine 81, asparagine 85, asparagine 171, and asparagine 177 each carry an N-linked (GlcNAc...) asparagine glycan. A glycan (N-linked (GlcNAc...) asparagine) is linked at asparagine 462. A helical membrane pass occupies residues 615–635 (VGALFPVCAAFVALAVALLFL). The Cytoplasmic segment spans residues 636 to 832 (LRCYFVLEPK…EIYSESGVPS (197 aa)). Residues 813–832 (SLGSKATPFEEIYSESGVPS) are disordered.

In terms of assembly, homodimer. Component of a cadherin:catenin adhesion complex composed of at least of CDH26, beta-catenin/CTNNB1, alpha-catenin/CTNNA1 and p120 catenin/CTNND1. N-glycosylated. Expressed by epithelial cells of gastrointestinal tissue.

Its subcellular location is the cell membrane. Its function is as follows. Cadherins are calcium-dependent cell adhesion proteins. They preferentially interact with themselves in a homophilic manner in connecting cells; cadherins may thus contribute to the sorting of heterogeneous cell types. Ligand for integrins alpha-E/beta-7, ITGAE:ITGAB7, alpha-4/beta-7, ITGA4:ITGAB7 and alpha-4/beta-1, ITGA4:ITGAB1 through which modulates CD4(+) T cells activation. This Homo sapiens (Human) protein is Cadherin-like protein 26 (CDH26).